Reading from the N-terminus, the 256-residue chain is Fibroblast growth factor 3 (256 aa).

A signal peptide spans 1–18 (MVIILLLLLLSFLDPSLE). Disordered regions lie at residues 31 to 54 (APCA…GGVY), 151 to 176 (RHHA…SSKR), and 219 to 256 (LRES…RADI). The span at 238 to 256 (ERRRRRHRGSKGHNRRADI) shows a compositional bias: basic residues.

Belongs to the heparin-binding growth factors family.

Its subcellular location is the secreted. Functionally, plays an important role in the regulation of embryonic development, cell proliferation, and cell differentiation. This is Fibroblast growth factor 3 (fgf3) from Danio rerio (Zebrafish).